A 194-amino-acid chain; its full sequence is Imidazoleglycerol-phosphate dehydratase (194 aa).

Belongs to the imidazoleglycerol-phosphate dehydratase family.

Its subcellular location is the cytoplasm. It carries out the reaction D-erythro-1-(imidazol-4-yl)glycerol 3-phosphate = 3-(imidazol-4-yl)-2-oxopropyl phosphate + H2O. It participates in amino-acid biosynthesis; L-histidine biosynthesis; L-histidine from 5-phospho-alpha-D-ribose 1-diphosphate: step 6/9. The polypeptide is Imidazoleglycerol-phosphate dehydratase (Bacillus cereus (strain ATCC 14579 / DSM 31 / CCUG 7414 / JCM 2152 / NBRC 15305 / NCIMB 9373 / NCTC 2599 / NRRL B-3711)).